The chain runs to 192 residues: Signal peptidase complex subunit 2 (192 aa).

At 1-46 (MEEKKTESTNKNVKKANLLDHHSIKHILDESVSDIVTSRGYKEDVR) the chain is on the cytoplasmic side. Residues 47–69 (LSNLKLILGTIIIVVALVAQFYN) form a helical membrane-spanning segment. Residues 70–78 (KKFPENRDF) are Lumenal-facing. A helical membrane pass occupies residues 79-98 (LIGCIALYVVLNAVLQLILY). Residues 99-192 (TKEKNAILFT…YAEEEPKKKK (94 aa)) are Cytoplasmic-facing.

This sequence belongs to the SPCS2 family. In terms of assembly, component of the signal peptidase complex (SPC) composed of a catalytic subunit SEC11 and three accessory subunits SPCS1, SPCS2 and SPCS3. The complex induces a local thinning of the ER membrane which is used to measure the length of the signal peptide (SP) h-region of protein substrates. This ensures the selectivity of the complex towards h-regions shorter than 18-20 amino acids.

It localises to the endoplasmic reticulum membrane. In terms of biological role, component of the signal peptidase complex (SPC) which catalyzes the cleavage of N-terminal signal sequences from nascent proteins as they are translocated into the lumen of the endoplasmic reticulum. Enhances the enzymatic activity of SPC and facilitates the interactions between different components of the translocation site. This is Signal peptidase complex subunit 2 from Arabidopsis thaliana (Mouse-ear cress).